The following is a 380-amino-acid chain: O-methyltransferase ucdC (380 aa).

Residues 222–223 (GG), Asp247, and Arg283 contribute to the S-adenosyl-L-methionine site. His287 acts as the Proton acceptor in catalysis.

It belongs to the class I-like SAM-binding methyltransferase superfamily. Cation-independent O-methyltransferase family. COMT subfamily.

The protein operates within secondary metabolite biosynthesis. In terms of biological role, nonribosomal peptide synthetase that mediates the biosynthesis of usterphenyllins and uscandidusins, p-terphenyl derivatives. Within the pathway, ucdC catalyzes O-methylation of the terphenyl triol intermediate produced by ucdB to yield terphenyllin carrying two methoxy moieties at C-9 and C-12. The pathway begin with the biosynthesis of 4-hydroxyphenylpyruvate (HPPA) from L-tyrosine, possibly by the aminotransferase ucdG. The nonribosomal peptide synthetase ucdA then condenses two HPPA units to produce atromentin. The key step in this pathway is the reduction and dehydration of atromentin to form a terphenyl triol intermediate, performed by the NAD-dependent dehydrogenase ucdB. Further O-methylation by the methyltransferase ucdC forms terphenyllin carrying two methoxy moieties at C-9 and C-12, and subsequent dihydroxylation at C-3 of ring A and C-15 of ring C by the flavin-dependent oxygenase ucdD leads to 3,15-dihydroxyterphenyllin. Prenylation by ucdE at position C-5 of ring A forms usterphenyllin B, and is followed by a second prenylation at position C-14 of ring C to form usterphenyllin A. The following furan ring formation that leads to uscandidusins A and B was proven to be an unexpected spontaneous non-enzymatic reaction. The chain is O-methyltransferase ucdC from Aspergillus ustus.